The chain runs to 44 residues: MKVLSSLKSAKQRAGCQVVKRKGRVFVICKENPRFKAVQGMKKK.

This sequence belongs to the bacterial ribosomal protein bL36 family.

This chain is Large ribosomal subunit protein bL36, found in Pseudoalteromonas translucida (strain TAC 125).